We begin with the raw amino-acid sequence, 117 residues long: Ig heavy chain V region 23 (117 aa).

Residues 1–19 (MGWSCIILFLVAAANGVHS) form the signal peptide. A framework-1 region spans residues 20–49 (QVQLQQPGTELVKPGASVKLSCKASGYTFT). C41 and C115 are joined by a disulfide. A complementarity-determining-1 region spans residues 50–54 (SYWMH). The interval 55-68 (WVKQRPGQGLEWIG) is framework-2. Residues 69 to 85 (NINPGNGGTNYNEKFKS) form a complementarity-determining-2 region. Residues 86 to 117 (KVTLTVDKSSSTAYTQLSSLTSEDSAVYYCAR) are framework-3.

This chain is Ig heavy chain V region 23, found in Mus musculus (Mouse).